The sequence spans 267 residues: Staphylococcal secretory antigen ssaA2 (267 aa).

The signal sequence occupies residues 1–27 (MKKIATATIATAGFATIAIASGNQAHA). Tandem repeats lie at residues 83-85 (YNN), 86-88 (YNN), 89-91 (YNN), 95-97 (YNN), 101-103 (YNN), 104-106 (YSN), and 113-115 (YNN). The 7 X 3 AA repeats of Y-[NS]-N stretch occupies residues 83 to 115 (YNNYNNYNNGYSYNNYSRYNNYSNNNQSYNYNN). In terms of domain architecture, Peptidase C51 spans 146 to 267 (MAPSSNGRSI…SQAAGYNFIH (122 aa)).

The protein resides in the secreted. Not known; immunogenic protein. This chain is Staphylococcal secretory antigen ssaA2 (ssaA2), found in Staphylococcus aureus (strain NCTC 8325 / PS 47).